The following is an 81-amino-acid chain: Small ribosomal subunit protein bS16 (81 aa).

Belongs to the bacterial ribosomal protein bS16 family.

This Teredinibacter turnerae (strain ATCC 39867 / T7901) protein is Small ribosomal subunit protein bS16.